Reading from the N-terminus, the 261-residue chain is uncharacterized protein (261 aa).

A signal peptide spans 1–20 (MKIQVMLIIIFVGIFTICLA). N-linked (GlcNAc...) asparagine; by host glycosylation is found at Asn-22 and Asn-27.

It is found in the secreted. This is an uncharacterized protein from Acanthamoeba polyphaga (Amoeba).